Consider the following 263-residue polypeptide: Thiamine thiazole synthase (263 aa).

Residues Ser-43, Glu-62–Arg-63, Gly-70, Val-134, and His-160–Asp-162 each bind NAD(+). The Fe cation site is built by Asp-162 and His-177. NAD(+) contacts are provided by Ser-180 and Met-227. Position 237 (Arg-237) interacts with glycine.

Belongs to the THI4 family. As to quaternary structure, homooctamer; tetramer of dimers. It depends on Fe(2+) as a cofactor.

It carries out the reaction hydrogen sulfide + glycine + NAD(+) = ADP-5-ethyl-4-methylthiazole-2-carboxylate + nicotinamide + 3 H2O + H(+). It participates in cofactor biosynthesis; thiamine diphosphate biosynthesis. Its function is as follows. Involved in the biosynthesis of the thiazole moiety of thiamine. Catalyzes the conversion of NAD and glycine to adenosine diphosphate 5-(2-hydroxyethyl)-4-methylthiazole-2-carboxylate (ADT), an adenylated thiazole intermediate, using free sulfide as a source of sulfur. This Methanococcus aeolicus (strain ATCC BAA-1280 / DSM 17508 / OCM 812 / Nankai-3) protein is Thiamine thiazole synthase.